The following is a 388-amino-acid chain: Protein RecA (388 aa).

79-86 (GPESSGKT) lines the ATP pocket. The segment at 347–372 (IDGEEVSEQDTENKKDEPKKEEAVNE) is disordered. Over residues 357–369 (TENKKDEPKKEEA) the composition is skewed to basic and acidic residues.

The protein belongs to the RecA family.

The protein localises to the cytoplasm. Functionally, can catalyze the hydrolysis of ATP in the presence of single-stranded DNA, the ATP-dependent uptake of single-stranded DNA by duplex DNA, and the ATP-dependent hybridization of homologous single-stranded DNAs. It interacts with LexA causing its activation and leading to its autocatalytic cleavage. This chain is Protein RecA, found in Streptococcus pneumoniae (strain CGSP14).